Reading from the N-terminus, the 359-residue chain is MSFWKVATLWQMPLRPSILVQVRTATKRAAGSRTSMKDSAGRRLGPKKTEGQRVEVGQIIMRQRGTRFYPGENVGIGKDHTLFALEPGWVRYYLDPFHTGRKFVGVALYQDMRLPIEHFAPRVRRFGRQLLSGKEAETEEQALPRSVFLAKEKILERAQQRADAREQRRAEFGHILREELGLALDQDAEQLATEYLLRVQTNLKSGFNSADARFNAMYHMEVRMRNTPEKVGQMDLLKKTVASVDAATSFSNKFELGRHISEGERVAWREALHKDLAGLVIRTAEEKQRVVERLKEASKYLSLSEEIHLRRKFLKPVKPETEAVAEAAGKGTVTIKRFNYGTGKVDTIIREKKAFLAKL.

The transit peptide at 1 to 24 (MSFWKVATLWQMPLRPSILVQVRT) directs the protein to the mitochondrion. The disordered stretch occupies residues 29–48 (AAGSRTSMKDSAGRRLGPKK). A compositionally biased stretch (basic and acidic residues) spans 35–48 (SMKDSAGRRLGPKK).

It belongs to the bacterial ribosomal protein bL27 family.

Its subcellular location is the mitochondrion. Its function is as follows. Component of the large subunit of mitochondrial ribosome. The polypeptide is Large ribosomal subunit protein bL27m (MRPL2) (Eremothecium gossypii (strain ATCC 10895 / CBS 109.51 / FGSC 9923 / NRRL Y-1056) (Yeast)).